The sequence spans 220 residues: Claudin-22 (220 aa).

At 1–10 (MGLVFRTATQ) the chain is on the cytoplasmic side. Residues 11 to 31 (AAALLLSLLGWVLSCLTNYLP) traverse the membrane as a helical segment. Residues 32 to 81 (HWKNLNLELNEMENWTMGLWKSCVIQEEVGRQCKDFDSFLALPAELQVSR) are Extracellular-facing. The helical transmembrane segment at 82–102 (VLMSLCNGLGLLGLLASGCGL) threads the bilayer. The Cytoplasmic segment spans residues 103–120 (DCLRLGETQEGLKKRLLT). The helical transmembrane segment at 121–141 (LGGTLLWTSGVMVLVPVSWVA) threads the bilayer. Over 142 to 164 (HKTVREFWDETMPEIVPRWEFGE) the chain is Extracellular. Residues 165–185 (ALFLGWFAGFCLVLGGCVLHC) traverse the membrane as a helical segment. Topologically, residues 186-220 (AACWSPAPAASSHYAVAGPRDHQQHLELKQANPEI) are cytoplasmic.

The protein belongs to the claudin family.

It localises to the cell junction. It is found in the tight junction. Its subcellular location is the cell membrane. In terms of biological role, plays a major role in tight junction-specific obliteration of the intercellular space, through calcium-independent cell-adhesion activity. The sequence is that of Claudin-22 (Cldn22) from Mus musculus (Mouse).